A 461-amino-acid chain; its full sequence is UPF0053 protein YhdT (461 aa).

One can recognise a CNNM transmembrane domain in the interval 1 to 202; that stretch reads MDDIDSLILI…LKNGEINPSE (202 aa). 3 helical membrane passes run 8-28, 103-123, and 137-157; these read ILIG…FAIV, VSFA…GELA, and LLIA…IWIL. CBS domains are found at residues 221-280 and 290-347; these read MIPR…MTEE and YVRP…IRDE.

Belongs to the UPF0053 family.

It localises to the cell membrane. The polypeptide is UPF0053 protein YhdT (yhdT) (Bacillus subtilis (strain 168)).